The following is a 133-amino-acid chain: Cytidine deaminase (133 aa).

The region spanning 4 to 126 (VDWNMLRGNA…DLLPDAFGLD (123 aa)) is the CMP/dCMP-type deaminase domain. Residue 45 to 47 (NVE) participates in substrate binding. Residue Cys-56 coordinates Zn(2+). Glu-58 functions as the Proton donor in the catalytic mechanism. Zn(2+) is bound by residues Cys-89 and Cys-92.

Belongs to the cytidine and deoxycytidylate deaminase family. Homotetramer. Requires Zn(2+) as cofactor.

The catalysed reaction is cytidine + H2O + H(+) = uridine + NH4(+). The enzyme catalyses 2'-deoxycytidine + H2O + H(+) = 2'-deoxyuridine + NH4(+). In terms of biological role, recycles cytidine and 2-deoxycytidine for uridine and 2-deoxyuridine synthesis, respectively. Catalyzes the hydrolytic deamination of cytidine and 2-deoxycytidine to form, respectively, uridine and 2-deoxyuridine. The protein is Cytidine deaminase (cdd) of Mycobacterium tuberculosis (strain CDC 1551 / Oshkosh).